Reading from the N-terminus, the 134-residue chain is Profilin-3 (134 aa).

Cys-13 and Cys-118 are joined by a disulfide. Residues 84–100 (AVIRGKKGSGGITSKKT) carry the Involved in PIP2 interaction motif. Position 114 is a phosphothreonine (Thr-114).

This sequence belongs to the profilin family. As to quaternary structure, occurs in many kinds of cells as a complex with monomeric actin in a 1:1 ratio. In terms of processing, phosphorylated by MAP kinases.

It is found in the cytoplasm. The protein resides in the cytoskeleton. Functionally, binds to actin and affects the structure of the cytoskeleton. At high concentrations, profilin prevents the polymerization of actin, whereas it enhances it at low concentrations. This Olea europaea (Common olive) protein is Profilin-3.